A 447-amino-acid polypeptide reads, in one-letter code: MDRRTFDRKTNNPQRYRLDRFVATRDSFSETRRRRSWHAAFDVHPVNNDRWSEGNLKKKNYIKYLDKAFDLESPDKNKSIKRMNRLWPCIPRKKTYLSSADSILDLPTYSYAIYPELLDWSNDNMLVAALGSSYHKWSWRSQSLIGHGFAEYEIQCCKFDPRGELLALGTYMKTLEIHNNSKSKKIMSNTCKCLEIDNMNCSITAVDWSPTGNSFAAGCSGGAVTSFTRAAKLISWRHLVREAILLIRVSPNARYLAVTAMNTALVLLLSWPSLEMYSSIDSDWSIRAICWHPWRSALLGVGAVTDDLQARIALWNAPTREVRDTSIGPKGYRLDSMLFSHRTGELVLSMWHSDRATLHPKTCSQLVVLSDPDTMVDQWGEGRSGLDRVRTMIFSPDGTKLATATTDEDLIIWNFLPEDNKMKKTKCRSFSALPECLDNAMLGYSLR.

6 WD repeats span residues 108 to 148 (TYSY…IGHG), 149 to 188 (FAEY…KIMS), 198 to 237 (NMNC…ISWR), 281 to 325 (DSDW…VRDT), 344 to 380 (GELV…DQWG), and 384 to 423 (SGLD…NKMK). Positions 384 to 395 (SGLDRVRTMIFS) match the D-box motif.

Belongs to the WD repeat CORT family.

It is found in the cytoplasm. Functionally, controls wing pigmentation patterning by regulating scale cell development, thereby playing a key role in mimicry and crypsis. Probably acts as an activator of the anaphase promoting complex/cyclosome (APC/C) that promotes the ubiquitin ligase activity and substrate specificity of the APC/C. This is Protein cortex from Heliconius melpomene (Postman butterfly).